The following is a 321-amino-acid chain: MRHRWEDRPVAPPPDGRPTEYLPFRQERGRHGRPGWLKARVPDGPGYREIKETMRGLSLHTVCEEARCPNIGECWNNRTATFMILGNVCTRSCGFCAVLTGRPQELDLEEPYRVADAVKKMGLRHAVITSVNRDELPDGGASVFAATIRAIRREVPGCAVEVLTPDFKGDRDAIKTVIDARPDTFNHNIETVPRLYPAVRPQAKYGRSLEVLRYAKELDPGVLTKSGFMVGLGEVEEEIVRTMRDLREHGVDILTIGQYLRPTENHLPMARYYTPQEFARYKKLGLEMGFSHVESGPLVRSSYHAHEQTEDARRGALGARG.

Residues 1–21 (MRHRWEDRPVAPPPDGRPTEY) are disordered. Positions 63, 68, 74, 89, 93, 96, and 302 each coordinate [4Fe-4S] cluster. In terms of domain architecture, Radical SAM core spans 75-291 (WNNRTATFMI…KKLGLEMGFS (217 aa)). A disordered region spans residues 301–321 (SSYHAHEQTEDARRGALGARG). A compositionally biased stretch (basic and acidic residues) spans 304 to 314 (HAHEQTEDARR).

The protein belongs to the radical SAM superfamily. Lipoyl synthase family. [4Fe-4S] cluster is required as a cofactor.

The protein resides in the cytoplasm. The catalysed reaction is [[Fe-S] cluster scaffold protein carrying a second [4Fe-4S](2+) cluster] + N(6)-octanoyl-L-lysyl-[protein] + 2 oxidized [2Fe-2S]-[ferredoxin] + 2 S-adenosyl-L-methionine + 4 H(+) = [[Fe-S] cluster scaffold protein] + N(6)-[(R)-dihydrolipoyl]-L-lysyl-[protein] + 4 Fe(3+) + 2 hydrogen sulfide + 2 5'-deoxyadenosine + 2 L-methionine + 2 reduced [2Fe-2S]-[ferredoxin]. It functions in the pathway protein modification; protein lipoylation via endogenous pathway; protein N(6)-(lipoyl)lysine from octanoyl-[acyl-carrier-protein]: step 2/2. Catalyzes the radical-mediated insertion of two sulfur atoms into the C-6 and C-8 positions of the octanoyl moiety bound to the lipoyl domains of lipoate-dependent enzymes, thereby converting the octanoylated domains into lipoylated derivatives. This Rubrobacter xylanophilus (strain DSM 9941 / JCM 11954 / NBRC 16129 / PRD-1) protein is Lipoyl synthase.